Consider the following 146-residue polypeptide: Large ribosomal subunit protein uL15 (146 aa).

The span at 1 to 18 (MKLHELKPSEGSRKERNR) shows a compositional bias: basic and acidic residues. The tract at residues 1 to 50 (MKLHELKPSEGSRKERNRVGRGTGSGNGKTSGRGHKGQKARSGGGVRLGF) is disordered. The span at 21-31 (RGTGSGNGKTS) shows a compositional bias: gly residues.

The protein belongs to the universal ribosomal protein uL15 family. Part of the 50S ribosomal subunit.

In terms of biological role, binds to the 23S rRNA. The polypeptide is Large ribosomal subunit protein uL15 (Listeria innocua serovar 6a (strain ATCC BAA-680 / CLIP 11262)).